The primary structure comprises 206 residues: Peptidyl-tRNA hydrolase (206 aa).

Tyr19 is a tRNA binding site. Residue His24 is the Proton acceptor of the active site. 3 residues coordinate tRNA: Tyr70, Asn72, and Asn118.

The protein belongs to the PTH family. In terms of assembly, monomer.

Its subcellular location is the cytoplasm. The catalysed reaction is an N-acyl-L-alpha-aminoacyl-tRNA + H2O = an N-acyl-L-amino acid + a tRNA + H(+). In terms of biological role, hydrolyzes ribosome-free peptidyl-tRNAs (with 1 or more amino acids incorporated), which drop off the ribosome during protein synthesis, or as a result of ribosome stalling. Catalyzes the release of premature peptidyl moieties from peptidyl-tRNA molecules trapped in stalled 50S ribosomal subunits, and thus maintains levels of free tRNAs and 50S ribosomes. The chain is Peptidyl-tRNA hydrolase from Prochlorococcus marinus (strain MIT 9303).